The chain runs to 312 residues: Serine acetyltransferase 5 (312 aa).

Residues M1–L17 show a composition bias toward basic and acidic residues. A disordered region spans residues M1–E25.

Belongs to the transferase hexapeptide repeat family. Homomultimer. As to expression, mostly expressed in stems, flowers and siliques. Localized in vascular tissues, particularly in phloem.

The protein resides in the cytoplasm. The enzyme catalyses L-serine + acetyl-CoA = O-acetyl-L-serine + CoA. Its pathway is amino-acid biosynthesis; L-cysteine biosynthesis; L-cysteine from L-serine: step 1/2. With respect to regulation, feedback inhibitions by L-Ser and acetyl-CoA. This Arabidopsis thaliana (Mouse-ear cress) protein is Serine acetyltransferase 5 (SAT5).